The sequence spans 367 residues: Endophilin-A2 (367 aa).

The interval 1-21 (MSVAGLKKQFYKASQLVSEKV) is membrane-binding amphipathic helix. The region spanning 18 to 249 (SEKVGGAEGT…LKRRMREASS (232 aa)) is the BAR domain. The interval 60 to 87 (PNPASRAKLTMLNTMSKIRGQVKNPGYP) is required for dimerization upon membrane association. Residues 181 to 250 (EELRQAMEKF…KRRMREASSR (70 aa)) are a coiled coil. The tract at residues 218-254 (LVDAQLDYHRQAVQILDELAEKLKRRMREASSRPRRE) is interaction with ARC. The disordered stretch occupies residues 243–293 (RMREASSRPRREYKPKPRETYDFGESDQSNGGFSCTPTPKVSASSSFRSDK). Positions 245-263 (REASSRPRREYKPKPRETY) are enriched in basic and acidic residues. Positions 268–289 (SDQSNGGFSCTPTPKVSASSSF) are enriched in polar residues. The 60-residue stretch at 305 to 364 (LDQPCCKALYDFEPENDGELGFKEGDIITLTNQIDENWYEGMINGQSGFFPLNYVEVLVP) folds into the SH3 domain.

Belongs to the endophilin family. In terms of assembly, interacts with ARC. Interacts with SYNJ1 and DNM1. Highest level in central region of the theca of developing follicles (at protein level). Expressed at highest level in brain and testis, at high level in kidney, lung and stroma, low level in spleen and adrenal gland (at protein level). Expressed in most tissue with highest levels in small ovarian follicles, brain and testis.

It is found in the cytoplasm. The protein localises to the early endosome membrane. Its subcellular location is the cell projection. The protein resides in the podosome. Its function is as follows. Implicated in endocytosis. May recruit other proteins to membranes with high curvature. The sequence is that of Endophilin-A2 from Gallus gallus (Chicken).